The following is a 168-amino-acid chain: Pleiotrophin (168 aa).

The N-terminal stretch at 1–32 is a signal peptide; the sequence is MSSQQYQQQRRKFAAAFLALIFILAAVDTAEA. 5 disulfide bridges follow: Cys-47–Cys-76, Cys-55–Cys-85, Cys-62–Cys-89, Cys-99–Cys-131, and Cys-109–Cys-141. 2 chondroitin sulfate binding regions span residues 92 to 99 and 123 to 131; these read KKQFGAEC and KRALHNADC. Residues 139-168 are disordered; sequence KPCGKLTKPKPQAESKKKKKEGKKQEKMLD. The segment at 147–168 is chondroitin sulfate A binding; it reads PKPQAESKKKKKEGKKQEKMLD.

This sequence belongs to the pleiotrophin family. As to quaternary structure, interacts with ALK and NEK6. Interacts with PTPRZ1 (via chondroitin sulfate groups); promotes formation of homooligomers; oligomerization impairs tyrosine phosphatase activity. Forms a complex with PTPRZ1 and CTNNB1; this complex inactivates PTPRZ1 protein tyrosine phosphatase activity through PTN interaction and stimulates tyrosine phosphorylation of CTNNB1. Interacts with ITGB3 and ITGA5. Forms a complex with PTPRZ1 and integrin alpha-V/beta-3 (ITGAV:ITGB3) that stimulates endothelial cell migration through ITGB3 'Tyr-773' phosphorylation. Interacts with SDC3 (via heparan sulfate chains); this interaction mediates the neurite outgrowth-promoting signal from PTN to the cytoskeleton of growing neurites; this interaction mediates osteoblast recruitment. Interacts with GPC2 (via heparan sulfate); this interaction promotes neurite outgrowth through binding of PTN with chondroitin sulfate of proteoglycans, thereby releasing PTPRS of chondroitin sulfate proteoglycans (CSPGs) and leading to binding with heparan sulfate of GPC2. Phosphorylated by NEK6. In terms of tissue distribution, osteoblast and brain. Expressed in the follicular epithelium and granulosa cells of the ovary. Strongly expressed in the uterus of newborn mice, and the degree of expression decreased in one-week-old mice, although the expression continues even in the uteri of adult mice. Expression gradually increases from proestrus to estrus, then decreases sharply, and thereafter gradually increased again. strongly expressed in the cochlea of WT mice 1 week after birth, and then the expression decreased and was undetectable by week 8 after birth. Expressed around the cell soma of osteocytes and apparently captured in the unmineralized interstitial matrix surrounding the cells. Furthermore distributed throughout the intraosseous canalicular porosity, being localized in the unmineralized matrix around the cell processes. Strongly expressed in the innermost layer of the periosteum.

It localises to the secreted. Functionally, secreted growth factor that mediates its signal through cell-surface proteoglycan and non-proteoglycan receptors. Binds cell-surface proteoglycan receptor via their chondroitin sulfate (CS) groups. Thereby regulates many processes like cell proliferation, cell survival, cell growth, cell differentiation and cell migration in several tissues namely neuron and bone. Also plays a role in synaptic plasticity and learning-related behavior by inhibiting long-term synaptic potentiation. Binds PTPRZ1, leading to neutralization of the negative charges of the CS chains of PTPRZ1, inducing PTPRZ1 clustering, thereby causing the dimerization and inactivation of its phosphatase activity leading to increased tyrosine phosphorylation of each of the PTPRZ1 substrates like ALK or AFAP1L2 in order to activate the PI3K-AKT pathway. Through PTPRZ1 binding controls oligodendrocyte precursor cell differentiation by enhancing the phosphorylation of AFAP1L2 in order to activate the PI3K-AKT pathway. Forms a complex with PTPRZ1 and integrin alpha-V/beta-3 (ITGAV:ITGB3) that stimulates endothelial cell migration through SRC dephosphorylation and activation that consequently leads to ITGB3 'Tyr-773' phosphorylation. In adult hippocampus promotes dendritic arborization, spine development, and functional integration and connectivity of newborn granule neurons through ALK by activating AKT signaling pathway. Binds GPC2 and chondroitin sulfate proteoglycans (CSPGs) at the neuron surface, leading to abrogation of binding between PTPRS and CSPGs and neurite outgrowth promotion. Binds SDC3 and mediates bone formation by recruiting and attaching osteoblasts/osteoblast precursors to the sites for new bone deposition. Binds ALK and promotes cell survival and cell proliferation through MAPK pathway activation. Inhibits proliferation and enhances differentiation of neural stem cells by inhibiting FGF2-induced fibroblast growth factor receptor signaling pathway. Mediates regulatory mechanisms in normal hemostasis and in hematopoietic regeneration and in maintaining the balance of myeloid and lymphoid regeneration. In addition may play a role in the female reproductive system, auditory response and the progesterone-induced decidualization pathway. This is Pleiotrophin from Mus musculus (Mouse).